The primary structure comprises 118 residues: Putative pterin-4-alpha-carbinolamine dehydratase (118 aa).

This sequence belongs to the pterin-4-alpha-carbinolamine dehydratase family.

It catalyses the reaction (4aS,6R)-4a-hydroxy-L-erythro-5,6,7,8-tetrahydrobiopterin = (6R)-L-erythro-6,7-dihydrobiopterin + H2O. The polypeptide is Putative pterin-4-alpha-carbinolamine dehydratase (Pseudomonas aeruginosa (strain LESB58)).